The chain runs to 595 residues: UvrABC system protein C (595 aa).

The GIY-YIG domain maps to 17-94; it reads FEPGCYLMKD…IKQYQPRYNI (78 aa). A UVR domain is found at 199–234; sequence KTIIKNLESRMQAASENLEFEQAKEYRDLIQNIHNL.

It belongs to the UvrC family. As to quaternary structure, interacts with UvrB in an incision complex.

Its subcellular location is the cytoplasm. Its function is as follows. The UvrABC repair system catalyzes the recognition and processing of DNA lesions. UvrC both incises the 5' and 3' sides of the lesion. The N-terminal half is responsible for the 3' incision and the C-terminal half is responsible for the 5' incision. The chain is UvrABC system protein C from Staphylococcus carnosus (strain TM300).